Reading from the N-terminus, the 191-residue chain is Ribonuclease MC (191 aa).

Q9 contacts RNA. C15 and C23 are joined by a disulfide. Residues H34, 72–73 (NV), R75, F81, 84–85 (HE), and 88–89 (KH) contribute to the RNA site. Residue H34 is the Proton donor of the active site. 3 cysteine pairs are disulfide-bonded: C48–C92, C152–C185, and C169–C180. The active site involves E85. The Proton acceptor role is filled by H89.

It belongs to the RNase T2 family.

It catalyses the reaction a ribonucleotidyl-ribonucleotide-RNA + H2O = a 3'-end 3'-phospho-ribonucleotide-RNA + a 5'-end dephospho-ribonucleoside-RNA + H(+). In terms of biological role, ribonuclease cleaving preferentially the 5'-side of uridine. This is Ribonuclease MC from Momordica charantia (Bitter gourd).